Reading from the N-terminus, the 200-residue chain is Recombination protein RecR (200 aa).

The C4-type zinc finger occupies Cys58–Cys75. In terms of domain architecture, Toprim spans Ser82 to Pro177.

It belongs to the RecR family.

May play a role in DNA repair. It seems to be involved in an RecBC-independent recombinational process of DNA repair. It may act with RecF and RecO. This is Recombination protein RecR from Chlamydia abortus (strain DSM 27085 / S26/3) (Chlamydophila abortus).